We begin with the raw amino-acid sequence, 287 residues long: Large ribosomal subunit protein uL2 (287 aa).

The tract at residues Arg221–Ser287 is disordered. Positions Lys258–Ser287 are enriched in basic residues.

It belongs to the universal ribosomal protein uL2 family. In terms of assembly, part of the 50S ribosomal subunit. Forms a bridge to the 30S subunit in the 70S ribosome.

Its function is as follows. One of the primary rRNA binding proteins. Required for association of the 30S and 50S subunits to form the 70S ribosome, for tRNA binding and peptide bond formation. It has been suggested to have peptidyltransferase activity; this is somewhat controversial. Makes several contacts with the 16S rRNA in the 70S ribosome. The polypeptide is Large ribosomal subunit protein uL2 (Prochlorococcus marinus (strain MIT 9312)).